A 964-amino-acid polypeptide reads, in one-letter code: Cycloisomaltooligosaccharide glucanotransferase (964 aa).

The N-terminal stretch at 1-30 (MRVKILPLVFMTLLLIVPSQMLLPSGQANA) is a signal peptide. CBM6 domains lie at 413-538 (DRYE…LTLG) and 740-863 (NMYE…LKLD).

The protein belongs to the glycosyl hydrolase 66 family.

It carries out the reaction cyclizes part of a (1-&gt;6)-alpha-D-glucan chain by formation of a (1-&gt;6)-alpha-D-glucosidic bond.. Functionally, produces cycloisomaltooligosaccharide from dextran. This chain is Cycloisomaltooligosaccharide glucanotransferase (cit), found in Niallia circulans (Bacillus circulans).